Here is a 144-residue protein sequence, read N- to C-terminus: Transcription antitermination protein NusB (144 aa).

It belongs to the NusB family.

Its function is as follows. Involved in transcription antitermination. Required for transcription of ribosomal RNA (rRNA) genes. Binds specifically to the boxA antiterminator sequence of the ribosomal RNA (rrn) operons. The polypeptide is Transcription antitermination protein NusB (Blochmanniella pennsylvanica (strain BPEN)).